We begin with the raw amino-acid sequence, 286 residues long: Bifunctional protein FolD (286 aa).

NADP(+) contacts are provided by residues 165 to 167 (GRS), Ser190, and Val231.

It belongs to the tetrahydrofolate dehydrogenase/cyclohydrolase family. In terms of assembly, homodimer.

The catalysed reaction is (6R)-5,10-methylene-5,6,7,8-tetrahydrofolate + NADP(+) = (6R)-5,10-methenyltetrahydrofolate + NADPH. The enzyme catalyses (6R)-5,10-methenyltetrahydrofolate + H2O = (6R)-10-formyltetrahydrofolate + H(+). The protein operates within one-carbon metabolism; tetrahydrofolate interconversion. In terms of biological role, catalyzes the oxidation of 5,10-methylenetetrahydrofolate to 5,10-methenyltetrahydrofolate and then the hydrolysis of 5,10-methenyltetrahydrofolate to 10-formyltetrahydrofolate. In Bacillus mycoides (strain KBAB4) (Bacillus weihenstephanensis), this protein is Bifunctional protein FolD.